The primary structure comprises 432 residues: Protein trichome birefringence-like 23 (432 aa).

Residues 13–35 form a helical; Signal-anchor for type II membrane protein membrane-spanning segment; it reads QNTYLIKLVAATLITCLAFRFFV. A GDS motif motif is present at residues 153-155; it reads GDS. A DCXHWCLPGXXDXWN motif motif is present at residues 404–418; the sequence is DCLHWCLPGPIDHLN.

Belongs to the PC-esterase family. TBL subfamily.

It is found in the membrane. In terms of biological role, may act as a bridging protein that binds pectin and other cell wall polysaccharides. Probably involved in maintaining esterification of pectins. May be involved in the specific O-acetylation of cell wall polymers. This Arabidopsis thaliana (Mouse-ear cress) protein is Protein trichome birefringence-like 23 (TBL23).